Reading from the N-terminus, the 487-residue chain is Sugar transporter ERD6-like 6 (487 aa).

At serine 2 the chain carries N-acetylserine. Transmembrane regions (helical) follow at residues 46 to 66 (ISVL…GFTC), 89 to 109 (VFGS…GQIA), 115 to 135 (KGSL…ISFA), 146 to 166 (LLEG…IAEI), 178 to 198 (VNQL…LFVP), 201 to 221 (ILAV…FFIP), 284 to 304 (LMVG…GVLF), 320 to 340 (AATF…TWLV), 347 to 367 (LLLT…AAAF), 389 to 409 (VGVV…PWLI), 425 to 445 (IATL…NLLL), and 451 to 471 (GTFT…TLWV).

This sequence belongs to the major facilitator superfamily. Sugar transporter (TC 2.A.1.1) family.

Its subcellular location is the membrane. Its function is as follows. Sugar transporter. This is Sugar transporter ERD6-like 6 from Arabidopsis thaliana (Mouse-ear cress).